The chain runs to 227 residues: UPF0173 metal-dependent hydrolase BC_4613 (227 aa).

This sequence belongs to the UPF0173 family.

The sequence is that of UPF0173 metal-dependent hydrolase BC_4613 from Bacillus cereus (strain ATCC 14579 / DSM 31 / CCUG 7414 / JCM 2152 / NBRC 15305 / NCIMB 9373 / NCTC 2599 / NRRL B-3711).